The chain runs to 581 residues: Adenine deaminase (581 aa).

Belongs to the metallo-dependent hydrolases superfamily. Adenine deaminase family. Requires Mn(2+) as cofactor.

It catalyses the reaction adenine + H2O + H(+) = hypoxanthine + NH4(+). The protein is Adenine deaminase of Brucella abortus (strain 2308).